A 137-amino-acid polypeptide reads, in one-letter code: Fluoride-specific ion channel FluC 4 (137 aa).

4 consecutive transmembrane segments (helical) span residues 20–40 (AAIG…ILGA), 43–63 (LWGT…FATL), 83–103 (GLCG…LLVL), and 110–130 (ALAY…LGLI). Na(+)-binding residues include glycine 86 and threonine 89.

It belongs to the fluoride channel Fluc/FEX (TC 1.A.43) family.

It is found in the cell inner membrane. It carries out the reaction fluoride(in) = fluoride(out). With respect to regulation, na(+) is not transported, but it plays an essential structural role and its presence is essential for fluoride channel function. In terms of biological role, fluoride-specific ion channel. Important for reducing fluoride concentration in the cell, thus reducing its toxicity. In Brucella suis biovar 1 (strain 1330), this protein is Fluoride-specific ion channel FluC 4.